The following is a 343-amino-acid chain: Dihydroorotase (343 aa).

Zn(2+) is bound by residues histidine 13 and histidine 15. Substrate-binding positions include 15 to 17 (HLR) and asparagine 41. Zn(2+) contacts are provided by lysine 99, histidine 136, and histidine 174. At lysine 99 the chain carries N6-carboxylysine. Histidine 136 is a binding site for substrate. Leucine 219 contributes to the substrate binding site. Residue aspartate 247 coordinates Zn(2+). Residue aspartate 247 is part of the active site. Positions 251 and 263 each coordinate substrate.

This sequence belongs to the metallo-dependent hydrolases superfamily. DHOase family. Class II DHOase subfamily. Homodimer. Requires Zn(2+) as cofactor.

The catalysed reaction is (S)-dihydroorotate + H2O = N-carbamoyl-L-aspartate + H(+). It participates in pyrimidine metabolism; UMP biosynthesis via de novo pathway; (S)-dihydroorotate from bicarbonate: step 3/3. Functionally, catalyzes the reversible cyclization of carbamoyl aspartate to dihydroorotate. This is Dihydroorotase from Shewanella baltica (strain OS223).